The primary structure comprises 103 residues: MRSADFSNPRILSNLMSKSEKEKRAIIIFNCRLNKGLYVTSACVSRSVFRCCKQEPLIEFVSPKMIAFVQIDGRYLTKMLTCDIHVRKEAKEGRGYQQIHKLS.

This is an uncharacterized protein from Saccharomyces cerevisiae (strain ATCC 204508 / S288c) (Baker's yeast).